The chain runs to 32 residues: MEALVYTFLLIGTLMVIFFAVFFRDTPRILKK.

A helical transmembrane segment spans residues 3-23 (ALVYTFLLIGTLMVIFFAVFF).

This sequence belongs to the PsbT family. PSII is composed of 1 copy each of membrane proteins PsbA, PsbB, PsbC, PsbD, PsbE, PsbF, PsbH, PsbI, PsbJ, PsbK, PsbL, PsbM, PsbT, PsbX, PsbY, PsbZ, Psb30/Ycf12, at least 3 peripheral proteins of the oxygen-evolving complex and a large number of cofactors. It forms dimeric complexes.

The protein localises to the plastid. The protein resides in the chloroplast thylakoid membrane. In terms of biological role, found at the monomer-monomer interface of the photosystem II (PS II) dimer, plays a role in assembly and dimerization of PSII. PSII is a light-driven water plastoquinone oxidoreductase, using light energy to abstract electrons from H(2)O, generating a proton gradient subsequently used for ATP formation. In Thalassiosira pseudonana (Marine diatom), this protein is Photosystem II reaction center protein T.